Consider the following 191-residue polypeptide: Transcription factor HES-2 (191 aa).

A disordered region spans residues 1-26 (MAPNVALADSMHNYQPKPGKRNQEAS). Residues 28–85 (LRKTLKPLMEKRRRARINESLNQLKTLILPLIGKDNSRYSKLEKADILEMTVRFLRDI) enclose the bHLH domain. Residues 97–130 (YKEGYRACVERLSAILGKSHVLTGEASNRLLEYL) form the Orange domain. Polar residues-rich tracts occupy residues 159–173 (RTSQFGSPLQNQPSS) and 182–191 (QLNSSIWRPW). The disordered stretch occupies residues 159-191 (RTSQFGSPLQNQPSSHRPAPCPPQLNSSIWRPW). The WRPW motif motif lies at 188 to 191 (WRPW).

In terms of assembly, transcription repression requires formation of a complex with a corepressor protein of the Groucho/TLE family. Homodimer, and heterodimer with the other bHLH proteins neurod1, neurod4/ath3, hes1/hairy1 and hes6r. Weakly interacts with the bHLH protein hey1/hrt1. Expressed in the animal half of the early cleavage stage embryo. During neurulation and organogenesis, the otic vesicles and retina are the main sites of expression; expression in otic placodes begins as early as stage 13.5, persisting in the otic vesicles at stage 30 and beyond. Also transiently expressed in the olfactory placodes. In addition, weakly expressed in primary neurons. Expression in the retina begins at stage 21, and is seen throughout the neural retina by stage 30. From stage 35 onwards, expression progressively declines in the central retina, while remaining high in the margins. At stage 41, expression becomes restricted to the ciliary marginal zone (CMZ) of the retina, the only region where retinogenesis is still occurring.

It is found in the nucleus. Transcriptional repressor. Essential in the retina to govern glial versus neuronal differentiation. Promotes gliogenesis through the inhibition of neuronal differentiation by at least two distinct mechanisms; represses proneural gene transcription, and also physically interacts with proneural proteins, including neurod1. The sequence is that of Transcription factor HES-2 (hes2) from Xenopus laevis (African clawed frog).